The sequence spans 62 residues: Photosystem II reaction center protein Z (62 aa).

Helical transmembrane passes span 8–28 (LVLL…VVLA) and 41–61 (YTGA…NSLV).

Belongs to the PsbZ family. In terms of assembly, PSII is composed of 1 copy each of membrane proteins PsbA, PsbB, PsbC, PsbD, PsbE, PsbF, PsbH, PsbI, PsbJ, PsbK, PsbL, PsbM, PsbT, PsbX, PsbY, PsbZ, Psb30/Ycf12, at least 3 peripheral proteins of the oxygen-evolving complex and a large number of cofactors. It forms dimeric complexes.

Its subcellular location is the plastid. It is found in the chloroplast thylakoid membrane. In terms of biological role, may control the interaction of photosystem II (PSII) cores with the light-harvesting antenna, regulates electron flow through the 2 photosystem reaction centers. PSII is a light-driven water plastoquinone oxidoreductase, using light energy to abstract electrons from H(2)O, generating a proton gradient subsequently used for ATP formation. This Pyropia yezoensis (Susabi-nori) protein is Photosystem II reaction center protein Z.